Consider the following 299-residue polypeptide: Very long chain fatty acid elongase 5 (299 aa).

Residue methionine 1 is modified to N-acetylmethionine. The next 7 membrane-spanning stretches (helical) occupy residues 26–46 (WFLL…LLIV), 64–84 (ILVV…CELV), 112–132 (VLWW…FFIL), 150–170 (MLNI…YFGA), 172–192 (LNSF…VLSM), 205–225 (GQLL…IWPC), and 226–246 (TFPL…IALF). The disordered stretch occupies residues 262-299 (RKDHLKDHQNGSKAAVNGHTNSFSPLENNVKPRKLRKD). A compositionally biased stretch (polar residues) spans 279-288 (GHTNSFSPLE). Serine 285 bears the Phosphoserine mark.

The protein belongs to the ELO family. ELOVL5 subfamily. Interacts with TECR.

Its subcellular location is the endoplasmic reticulum membrane. It is found in the cell projection. The protein localises to the dendrite. The catalysed reaction is a very-long-chain acyl-CoA + malonyl-CoA + H(+) = a very-long-chain 3-oxoacyl-CoA + CO2 + CoA. It catalyses the reaction (6Z,9Z,12Z)-octadecatrienoyl-CoA + malonyl-CoA + H(+) = (8Z,11Z,14Z)-3-oxoeicosatrienoyl-CoA + CO2 + CoA. The enzyme catalyses (9Z,12Z,15Z)-octadecatrienoyl-CoA + malonyl-CoA + H(+) = (11Z,14Z,17Z)-3-oxoeicosatrienoyl-CoA + CO2 + CoA. It carries out the reaction (9Z)-hexadecenoyl-CoA + malonyl-CoA + H(+) = 3-oxo-(11Z)-octadecenoyl-CoA + CO2 + CoA. The catalysed reaction is (9Z)-octadecenoyl-CoA + malonyl-CoA + H(+) = 3-oxo-(11Z)-eicosenoyl-CoA + CO2 + CoA. It catalyses the reaction (11Z)-octadecenoyl-CoA + malonyl-CoA + H(+) = 3-oxo-(13Z)-eicosenoyl-CoA + CO2 + CoA. The enzyme catalyses (9Z,12Z)-octadecadienoyl-CoA + malonyl-CoA + H(+) = (11Z,14Z)-3-oxoicosa-11,14-dienoyl-CoA + CO2 + CoA. It carries out the reaction (6Z,9Z,12Z,15Z)-octadecatetraenoyl-CoA + malonyl-CoA + H(+) = (8Z,11Z,14Z,17Z)-3-oxoicosatetraenoyl-CoA + CO2 + CoA. The catalysed reaction is (5Z,8Z,11Z,14Z)-eicosatetraenoyl-CoA + malonyl-CoA + H(+) = (7Z,10Z,13Z,16Z)-3-oxodocosatetraenoyl-CoA + CO2 + CoA. It catalyses the reaction (5Z,8Z,11Z,14Z,17Z)-eicosapentaenoyl-CoA + malonyl-CoA + H(+) = 3-oxo-(7Z,10Z,13Z,16Z,19Z)-docosapentaenoyl-CoA + CO2 + CoA. Its pathway is lipid metabolism; polyunsaturated fatty acid biosynthesis. In terms of biological role, catalyzes the first and rate-limiting reaction of the four reactions that constitute the long-chain fatty acids elongation cycle. This endoplasmic reticulum-bound enzymatic process allows the addition of 2 carbons to the chain of long- and very long-chain fatty acids (VLCFAs) per cycle. Condensing enzyme that acts specifically toward polyunsaturated acyl-CoA with the higher activity toward C18:3(n-6) acyl-CoA. May participate in the production of monounsaturated and of polyunsaturated VLCFAs of different chain lengths that are involved in multiple biological processes as precursors of membrane lipids and lipid mediators. In conditions where the essential linoleic and alpha linoleic fatty acids are lacking it is also involved in the synthesis of Mead acid from oleic acid. This chain is Very long chain fatty acid elongase 5, found in Pongo abelii (Sumatran orangutan).